The chain runs to 96 residues: Large ribosomal subunit protein eL21 (96 aa).

The protein belongs to the eukaryotic ribosomal protein eL21 family.

In Methanothrix thermoacetophila (strain DSM 6194 / JCM 14653 / NBRC 101360 / PT) (Methanosaeta thermophila), this protein is Large ribosomal subunit protein eL21.